The sequence spans 220 residues: Probable metallo-hydrolase YybB (220 aa).

Residues H67, H69, D71, H72, H139, D158, and H200 each coordinate Zn(2+).

This sequence belongs to the metallo-beta-lactamase superfamily. Zn(2+) is required as a cofactor.

The chain is Probable metallo-hydrolase YybB (yybB) from Bacillus subtilis (strain 168).